Consider the following 676-residue polypeptide: ATP-dependent zinc metalloprotease FtsH (676 aa).

Over 1-12 (MSFFDKIFKKFH) the chain is Cytoplasmic. Residues 13–33 (MGVLYFAVILIGATFIYCYFT) form a helical membrane-spanning segment. Residues 34–115 (KHEKKDNNTF…DPRPWNGYEH (82 aa)) are Extracellular-facing. Residues 116-136 (VFWVFRQCLTMLFFYCFFLFF) traverse the membrane as a helical segment. Residues 137 to 676 (ADTIKQMGQE…EVLSTDSEQT (540 aa)) are Cytoplasmic-facing. 212–219 (GPPGTGKT) provides a ligand contact to ATP. His-433 is a binding site for Zn(2+). Glu-434 is an active-site residue. Residues His-437 and Asp-509 each contribute to the Zn(2+) site. The interval 610–676 (EKEETNAPTQ…EVLSTDSEQT (67 aa)) is disordered. Polar residues predominate over residues 615–636 (NAPTQTTSQMSSNNETTNTDKT). A compositionally biased stretch (low complexity) spans 650–667 (NQESNESNPNNNEKASPE).

It in the central section; belongs to the AAA ATPase family. This sequence in the C-terminal section; belongs to the peptidase M41 family. Homohexamer. It depends on Zn(2+) as a cofactor.

It localises to the cell membrane. In terms of biological role, acts as a processive, ATP-dependent zinc metallopeptidase for both cytoplasmic and membrane proteins. Plays a role in the quality control of integral membrane proteins. In Aster yellows witches'-broom phytoplasma (strain AYWB), this protein is ATP-dependent zinc metalloprotease FtsH.